Reading from the N-terminus, the 1099-residue chain is Carbamoyl phosphate synthase large chain (1099 aa).

Positions 1–402 (MPKREDIKRI…ALGKALRSLE (402 aa)) are carboxyphosphate synthetic domain. The ATP site is built by Arg-129, Arg-169, Gly-175, Gly-176, Glu-208, Val-210, Glu-215, Gly-241, Ile-242, His-243, Gln-285, and Glu-299. Residues 133 to 328 (KETMEKAGLE…IAKVAALLAV (196 aa)) enclose the ATP-grasp 1 domain. Residues Gln-285, Glu-299, and Asn-301 each contribute to the Mg(2+) site. Residues Gln-285, Glu-299, and Asn-301 each coordinate Mn(2+). Residues 403 to 541 (LDAAPKLDLE…STYNGVENEA (139 aa)) are oligomerization domain. Residues 542-944 (VPSDREKIMI…AFAKAQIAAG (403 aa)) are carbamoyl phosphate synthetic domain. The ATP-grasp 2 domain occupies 666–857 (AKLLKQIGLK…VARIAAKIMV (192 aa)). ATP contacts are provided by Arg-702, Lys-741, Leu-743, Glu-748, Gly-773, Val-774, His-775, Ser-776, Gln-816, and Glu-828. Mg(2+)-binding residues include Gln-816, Glu-828, and Asn-830. Mn(2+) contacts are provided by Gln-816, Glu-828, and Asn-830. Residues 945-1099 (NPLPTTGAIL…VRRLTDTWKM (155 aa)) form the MGS-like domain. An allosteric domain region spans residues 945–1099 (NPLPTTGAIL…VRRLTDTWKM (155 aa)).

It belongs to the CarB family. As to quaternary structure, composed of two chains; the small (or glutamine) chain promotes the hydrolysis of glutamine to ammonia, which is used by the large (or ammonia) chain to synthesize carbamoyl phosphate. Tetramer of heterodimers (alpha,beta)4. Requires Mg(2+) as cofactor. It depends on Mn(2+) as a cofactor.

It carries out the reaction hydrogencarbonate + L-glutamine + 2 ATP + H2O = carbamoyl phosphate + L-glutamate + 2 ADP + phosphate + 2 H(+). The catalysed reaction is hydrogencarbonate + NH4(+) + 2 ATP = carbamoyl phosphate + 2 ADP + phosphate + 2 H(+). The protein operates within amino-acid biosynthesis; L-arginine biosynthesis; carbamoyl phosphate from bicarbonate: step 1/1. Its pathway is pyrimidine metabolism; UMP biosynthesis via de novo pathway; (S)-dihydroorotate from bicarbonate: step 1/3. Large subunit of the glutamine-dependent carbamoyl phosphate synthetase (CPSase). CPSase catalyzes the formation of carbamoyl phosphate from the ammonia moiety of glutamine, carbonate, and phosphate donated by ATP, constituting the first step of 2 biosynthetic pathways, one leading to arginine and/or urea and the other to pyrimidine nucleotides. The large subunit (synthetase) binds the substrates ammonia (free or transferred from glutamine from the small subunit), hydrogencarbonate and ATP and carries out an ATP-coupled ligase reaction, activating hydrogencarbonate by forming carboxy phosphate which reacts with ammonia to form carbamoyl phosphate. In Thermotoga maritima (strain ATCC 43589 / DSM 3109 / JCM 10099 / NBRC 100826 / MSB8), this protein is Carbamoyl phosphate synthase large chain.